Here is a 153-residue protein sequence, read N- to C-terminus: AEFERTFIAIKPDGVQRGLISEIVARFERKGFSLVAIKVVIPSRPFAQKHYADLKDKPFYVGLVAYWSSGPVVAMVWEGEGVIKYGRKLIGATDPQKSEPGTIRGDLAVVNGRNIIHGSDGPETAKDEIKLWFKPEELVNYTHNAEKWIYGDN.

6 residues coordinate ATP: Lys-11, Phe-59, Arg-87, Thr-93, Arg-104, and Asn-114. Catalysis depends on His-117, which acts as the Pros-phosphohistidine intermediate.

It belongs to the NDK family. In terms of assembly, homohexamer. Mg(2+) is required as a cofactor.

Its subcellular location is the plastid. The protein resides in the chloroplast thylakoid lumen. It carries out the reaction a 2'-deoxyribonucleoside 5'-diphosphate + ATP = a 2'-deoxyribonucleoside 5'-triphosphate + ADP. The catalysed reaction is a ribonucleoside 5'-diphosphate + ATP = a ribonucleoside 5'-triphosphate + ADP. In terms of biological role, major role in the synthesis of nucleoside triphosphates other than ATP. The ATP gamma phosphate is transferred to the NDP beta phosphate via a ping-pong mechanism, using a phosphorylated active-site intermediate. Shows the highest specificity towards GDP. This is Nucleoside diphosphate kinase 3 from Spinacia oleracea (Spinach).